A 373-amino-acid chain; its full sequence is Transcription factor bHLH87 (373 aa).

The tract at residues 127-227 is disordered; sequence SAESENREIT…GGSSNISFQH (101 aa). The span at 188 to 218 shows a compositional bias: basic and acidic residues; the sequence is PQDDSEKGGFKLIYDENQSKSKKPRTEKERG. In terms of domain architecture, bHLH spans 275-324; sequence ISTDPQTVAARQRRERISEKIRVLQTLVPGGTKMDTASMLDEAANYLKFL.

As to quaternary structure, homodimer. As to expression, flowers.

The protein localises to the nucleus. This is Transcription factor bHLH87 (BHLH87) from Arabidopsis thaliana (Mouse-ear cress).